We begin with the raw amino-acid sequence, 90 residues long: DNA/RNA-binding protein Alba (90 aa).

The residue at position 8 (Lys8) is an N6-acetyllysine.

It belongs to the histone-like Alba family. Acetylated. Acetylation at Lys-8 decreases DNA-binding affinity.

The protein localises to the cytoplasm. It is found in the chromosome. In terms of biological role, binds double-stranded DNA tightly but without sequence specificity. Involved in DNA compaction. The protein is DNA/RNA-binding protein Alba of Nanoarchaeum equitans (strain Kin4-M).